The following is a 253-amino-acid chain: Ribonuclease HII (253 aa).

The region spanning 70–253 is the RNase H type-2 domain; it reads DLIAGVDEVG…KTFAPIKDIL (184 aa). 3 residues coordinate a divalent metal cation: Asp76, Glu77, and Asp168.

Belongs to the RNase HII family. Mn(2+) serves as cofactor. Requires Mg(2+) as cofactor.

It is found in the cytoplasm. The catalysed reaction is Endonucleolytic cleavage to 5'-phosphomonoester.. Endonuclease that specifically degrades the RNA of RNA-DNA hybrids. In Leuconostoc mesenteroides subsp. mesenteroides (strain ATCC 8293 / DSM 20343 / BCRC 11652 / CCM 1803 / JCM 6124 / NCDO 523 / NBRC 100496 / NCIMB 8023 / NCTC 12954 / NRRL B-1118 / 37Y), this protein is Ribonuclease HII.